The sequence spans 309 residues: ATP synthase gamma chain (309 aa).

The protein belongs to the ATPase gamma chain family. F-type ATPases have 2 components, CF(1) - the catalytic core - and CF(0) - the membrane proton channel. CF(1) has five subunits: alpha(3), beta(3), gamma(1), delta(1), epsilon(1). CF(0) has three main subunits: a, b and c.

It localises to the cell membrane. In terms of biological role, produces ATP from ADP in the presence of a proton gradient across the membrane. The gamma chain is believed to be important in regulating ATPase activity and the flow of protons through the CF(0) complex. In Mycolicibacterium vanbaalenii (strain DSM 7251 / JCM 13017 / BCRC 16820 / KCTC 9966 / NRRL B-24157 / PYR-1) (Mycobacterium vanbaalenii), this protein is ATP synthase gamma chain.